Consider the following 469-residue polypeptide: Protein RUFY3 (469 aa).

Phosphothreonine occurs at positions 5 and 12. 3 positions are modified to phosphoserine: Tyr27, Ser34, and Ser49. Thr51 is modified (phosphothreonine). Asp53 carries the post-translational modification Phosphoserine. Residues 95–227 form the RUN domain; it reads DSDYAPLQQF…IDANFCMKGE (133 aa). 2 coiled-coil regions span residues 271 to 362 and 422 to 463; these read NRHL…VEKE and KSEL…AANK. Over residues 321–337 the composition is skewed to basic and acidic residues; it reads SYLLESNRKGPKQDRTA. Positions 321–342 are disordered; sequence SYLLESNRKGPKQDRTAEGQAL.

As to quaternary structure, interacts with PAK1. Interacts (via C-terminus) with Ras-related Rab-5 proteins. Interacts (via C-terminus) with Ras-related Rap-2 proteins. Interacts with PIK3CA and PIK3R1. Interacts (via N-terminus) with FSCN1; this interaction induces neuron axon development. Interacts with DBN1. Interacts (via the second coiled coil) with GTP-, but not GDP-bound ARL8A and ARL8B. Interacts with dynactin/DCTN1 and the dynein intermediate chain DYNC1I1/2. Directly interacts with DYNC1LI1. Post-translationally, phosphorylated by PAK1. Isoform 1 is partially phosphorylated. Expressed in brain (at protein level).

The protein localises to the cytoplasm. It is found in the endomembrane system. Its subcellular location is the cell projection. The protein resides in the invadopodium. It localises to the growth cone. The protein localises to the perikaryon. It is found in the filopodium. Its subcellular location is the lamellipodium. The protein resides in the lysosome. ARL8 effector that promotes the coupling of endolysosomes to dynein-dynactin for retrograde transport along microtubules. Acts by binding both GTP-bound ARL8 and dynein-dynactin. In nonneuronal cells, promotes concentration of endolysosomes in the juxtanuclear area. In hippocampal neurons, drives retrograde transport of endolysosomes from the axon to the soma. Plays a role in the generation of neuronal polarity formation and axon growth. Implicated in the formation of a single axon by developing neurons. May inhibit the formation of additional axons by inhibition of PI3K in minor neuronal processes. Plays a role in the formation of F-actin-enriched protrusive structures at the cell periphery. Plays a role in cytoskeletal organization by regulating the subcellular localization of FSCN1 and DBN1 at axonal growth cones. In Mus musculus (Mouse), this protein is Protein RUFY3.